A 903-amino-acid chain; its full sequence is Protein translocase subunit SecA (903 aa).

Residues glutamine 89, 107–111, and aspartate 502 contribute to the ATP site; that span reads GEGKT. Residues cysteine 886, cysteine 888, cysteine 897, and histidine 898 each coordinate Zn(2+).

This sequence belongs to the SecA family. As to quaternary structure, monomer and homodimer. Part of the essential Sec protein translocation apparatus which comprises SecA, SecYEG and auxiliary proteins SecDF-YajC and YidC. Zn(2+) serves as cofactor.

It localises to the cell inner membrane. Its subcellular location is the cytoplasm. It carries out the reaction ATP + H2O + cellular proteinSide 1 = ADP + phosphate + cellular proteinSide 2.. In terms of biological role, part of the Sec protein translocase complex. Interacts with the SecYEG preprotein conducting channel. Has a central role in coupling the hydrolysis of ATP to the transfer of proteins into and across the cell membrane, serving both as a receptor for the preprotein-SecB complex and as an ATP-driven molecular motor driving the stepwise translocation of polypeptide chains across the membrane. The polypeptide is Protein translocase subunit SecA (Rhizobium meliloti (strain 1021) (Ensifer meliloti)).